The chain runs to 283 residues: uncharacterized protein (283 aa).

Positions 4–131 (RPLHAFEVVA…MGPGGAYAPD (128 aa)) constitute an FAD-binding FR-type domain.

This is an uncharacterized protein from Mycobacterium bovis (strain ATCC BAA-935 / AF2122/97).